The primary structure comprises 330 residues: Glycerol-3-phosphate dehydrogenase [NAD(P)+] (330 aa).

Residues Ser-14, Phe-15, Arg-35, and Lys-109 each contribute to the NADPH site. Sn-glycerol 3-phosphate is bound by residues Lys-109 and Gly-137. NADPH is bound at residue Ala-141. Sn-glycerol 3-phosphate contacts are provided by Lys-192, Asp-248, Ser-258, Arg-259, and Asn-260. Residue Lys-192 is the Proton acceptor of the active site. Arg-259 lines the NADPH pocket. NADPH is bound by residues Leu-283 and Glu-285.

It belongs to the NAD-dependent glycerol-3-phosphate dehydrogenase family.

The protein localises to the cytoplasm. The enzyme catalyses sn-glycerol 3-phosphate + NAD(+) = dihydroxyacetone phosphate + NADH + H(+). It carries out the reaction sn-glycerol 3-phosphate + NADP(+) = dihydroxyacetone phosphate + NADPH + H(+). It functions in the pathway membrane lipid metabolism; glycerophospholipid metabolism. Catalyzes the reduction of the glycolytic intermediate dihydroxyacetone phosphate (DHAP) to sn-glycerol 3-phosphate (G3P), the key precursor for phospholipid synthesis. The chain is Glycerol-3-phosphate dehydrogenase [NAD(P)+] from Rickettsia massiliae (strain Mtu5).